Reading from the N-terminus, the 469-residue chain is Calcium-binding mitochondrial carrier protein SCaMC-2 (469 aa).

Topologically, residues 1-189 are mitochondrial intermembrane; sequence MLCLCLYVPL…ERQTGMWWRH (189 aa). EF-hand domains lie at 47–80, 78–113, and 114–149; these read TYRQ…QDHE, DHEK…LGVK, and ISEQ…HPVE. D60, D62, D64, Q66, and E71 together coordinate Ca(2+). Solcar repeat units lie at residues 184–270, 278–363, and 375–463; these read GMWW…IKRL, LRIH…LKNA, and PGVF…LKIT. The chain crosses the membrane as a helical span at residues 190-207; it reads LVAGGGAGAVSRTCTAPL. Topologically, residues 208–244 are mitochondrial matrix; the sequence is DRLKVLMQVHASRSNNMCIVGGFTQMIREGGARSLWR. The helical transmembrane segment at 245–264 threads the bilayer; it reads GNGINVLKIAPESAIKFMAY. The Mitochondrial intermembrane portion of the chain corresponds to 265–287; it reads EQIKRLIGSDQETLRIHERLVAG. The chain crosses the membrane as a helical span at residues 288-301; sequence SLAGAIAQSSIYPM. The Mitochondrial matrix portion of the chain corresponds to 302–337; the sequence is EVLKTRMALRKTGQYSGMLDCARKILAREGMAAFYK. A helical transmembrane segment spans residues 338–357; sequence GYVPNMLGIIPYAGIDLAVY. Residues 358-380 are Mitochondrial intermembrane-facing; that stretch reads ETLKNAWLQRYAVNSADPGVFVL. The chain crosses the membrane as a helical span at residues 381–398; the sequence is LACGTMSSTCGQLASYPL. The Mitochondrial matrix portion of the chain corresponds to 399–437; the sequence is ALVRTRMQAQASMEGAPEVTMSSLFKQILRTEGAFGLYR. A helical transmembrane segment spans residues 438-457; that stretch reads GLAPNFMKVIPAVSISYVVY. Topologically, residues 458 to 469 are mitochondrial intermembrane; it reads ENLKITLGVQSR.

It belongs to the mitochondrial carrier (TC 2.A.29) family.

The protein localises to the mitochondrion inner membrane. Calcium-dependent mitochondrial solute carrier. Mitochondrial solute carriers shuttle metabolites, nucleotides, and cofactors through the mitochondrial inner membrane. May act as a ATP-Mg/Pi exchanger that mediates the transport of Mg-ATP in exchange for phosphate, catalyzing the net uptake or efflux of adenine nucleotides into or from the mitochondria. This is Calcium-binding mitochondrial carrier protein SCaMC-2 (SLC25A25) from Bos taurus (Bovine).